The primary structure comprises 250 residues: 26S proteasome non-ATPase regulatory subunit 8 (250 aa).

Residues 63–233 enclose the PCI domain; that stretch reads HDFETFDDYI…QEKPVNLDTV (171 aa).

Belongs to the proteasome subunit S14 family.

Acts as a regulatory subunit of the 26S proteasome which is involved in the ATP-dependent degradation of ubiquitinated proteins. This chain is 26S proteasome non-ATPase regulatory subunit 8, found in Caenorhabditis elegans.